A 253-amino-acid chain; its full sequence is Large ribosomal subunit protein uL4 (253 aa).

Residues 78–107 form a disordered region; sequence SRAARVPHAKGGRRAHPPKPEADRSEKVNT. Residues 82–94 show a composition bias toward basic residues; the sequence is RVPHAKGGRRAHP. Residues 95 to 107 are compositionally biased toward basic and acidic residues; the sequence is PKPEADRSEKVNT.

Belongs to the universal ribosomal protein uL4 family. In terms of assembly, part of the 50S ribosomal subunit.

In terms of biological role, one of the primary rRNA binding proteins, this protein initially binds near the 5'-end of the 23S rRNA. It is important during the early stages of 50S assembly. It makes multiple contacts with different domains of the 23S rRNA in the assembled 50S subunit and ribosome. Forms part of the polypeptide exit tunnel. The polypeptide is Large ribosomal subunit protein uL4 (Methanosarcina acetivorans (strain ATCC 35395 / DSM 2834 / JCM 12185 / C2A)).